A 68-amino-acid polypeptide reads, in one-letter code: Neuronal regeneration-related protein (68 aa).

The protein is Neuronal regeneration-related protein (NREP) of Gallus gallus (Chicken).